A 179-amino-acid polypeptide reads, in one-letter code: ATP synthase subunit b (179 aa).

Residues Val29–Gly48 traverse the membrane as a helical segment.

This sequence belongs to the ATPase B chain family. As to quaternary structure, F-type ATPases have 2 components, F(1) - the catalytic core - and F(0) - the membrane proton channel. F(1) has five subunits: alpha(3), beta(3), gamma(1), delta(1), epsilon(1). F(0) has four main subunits: a(1), b(1), b'(1) and c(10-14). The alpha and beta chains form an alternating ring which encloses part of the gamma chain. F(1) is attached to F(0) by a central stalk formed by the gamma and epsilon chains, while a peripheral stalk is formed by the delta, b and b' chains.

The protein resides in the cellular thylakoid membrane. Its function is as follows. F(1)F(0) ATP synthase produces ATP from ADP in the presence of a proton or sodium gradient. F-type ATPases consist of two structural domains, F(1) containing the extramembraneous catalytic core and F(0) containing the membrane proton channel, linked together by a central stalk and a peripheral stalk. During catalysis, ATP synthesis in the catalytic domain of F(1) is coupled via a rotary mechanism of the central stalk subunits to proton translocation. Functionally, component of the F(0) channel, it forms part of the peripheral stalk, linking F(1) to F(0). In terms of biological role, the complex from the organism is particularly stable to disruption and remains functional after 6 hrs at 55 degrees Celsius. The polypeptide is ATP synthase subunit b (Thermosynechococcus vestitus (strain NIES-2133 / IAM M-273 / BP-1)).